A 142-amino-acid chain; its full sequence is Large ribosomal subunit protein uL11 (142 aa).

This sequence belongs to the universal ribosomal protein uL11 family. Part of the ribosomal stalk of the 50S ribosomal subunit. Interacts with L10 and the large rRNA to form the base of the stalk. L10 forms an elongated spine to which L12 dimers bind in a sequential fashion forming a multimeric L10(L12)X complex. Post-translationally, one or more lysine residues are methylated.

Forms part of the ribosomal stalk which helps the ribosome interact with GTP-bound translation factors. This is Large ribosomal subunit protein uL11 from Shewanella halifaxensis (strain HAW-EB4).